The primary structure comprises 251 residues: Precorrin-4 C(11)-methyltransferase (251 aa).

This sequence belongs to the precorrin methyltransferase family.

It carries out the reaction precorrin-4 + S-adenosyl-L-methionine = precorrin-5 + S-adenosyl-L-homocysteine. Its pathway is cofactor biosynthesis; adenosylcobalamin biosynthesis; cob(II)yrinate a,c-diamide from precorrin-2 (aerobic route): step 4/10. Its function is as follows. Catalyzes the methylation of C-11 in precorrin-4 to form precorrin-5. The chain is Precorrin-4 C(11)-methyltransferase (cobM) from Mycobacterium tuberculosis (strain CDC 1551 / Oshkosh).